A 402-amino-acid polypeptide reads, in one-letter code: Baeyer-Villiger oxidase notM (402 aa).

It belongs to the questin oxidase family.

Its function is as follows. Baeyer-Villiger oxidase; part of the gene cluster that mediates the biosynthesis of notoamide, a fungal indole alkaloid that belongs to a family of natural products containing a characteristic bicyclo[2.2.2]diazaoctane core. The first step of notoamide biosynthesis involves coupling of L-proline and L-tryptophan by the bimodular NRPS notE, to produce cyclo-L-tryptophan-L-proline called brevianamide F. The reverse prenyltransferase notF then acts as a deoxybrevianamide E synthase and converts brevianamide F to deoxybrevianamide E via reverse prenylation at C-2 of the indole ring leading to the bicyclo[2.2.2]diazaoctane core. Deoxybrevianamide E is further hydroxylated at C-6 of the indole ring, likely catalyzed by the cytochrome P450 monooxygenase notG, to yield 6-hydroxy-deoxybrevianamide E. 6-hydroxy-deoxybrevianamide E is a specific substrate of the prenyltransferase notC for normal prenylation at C-7 to produce 6-hydroxy-7-prenyl-deoxybrevianamide, also called notoamide S. As the proposed pivotal branching point in notoamide biosynthesis, notoamide S can be diverted to notoamide E through an oxidative pyran ring closure putatively catalyzed by either notH cytochrome P450 monooxygenase or the notD FAD-linked oxidoreductase. This step would be followed by an indole 2,3-epoxidation-initiated pinacol-like rearrangement catalyzed by the notB FAD-dependent monooxygenase leading to the formation of notoamide C and notoamide D. On the other hand notoamide S is converted to notoamide T by notH (or notD), a bifunctional oxidase that also functions as the intramolecular Diels-Alderase responsible for generation of (+)-notoamide T. To generate antipodal (-)-notoaminide T, notH' (or notD') in Aspergillus versicolor is expected to catalyze a Diels-Alder reaction leading to the opposite stereochemistry. The remaining oxidoreductase notD (or notH) likely catalyzes the oxidative pyran ring formation to yield (+)-stephacidin A. The FAD-dependent monooxygenase notI is highly similar to notB and is predicted to catalyze a similar conversion from (+)-stephacidin A to (-)-notoamide B via the 2,3-epoxidation of (+)-stephacidin A followed by a pinacol-type rearrangement. Finally, it remains unclear which enzyme could be responsible for the final hydroxylation steps leading to notoamide A and sclerotiamide. The function of notM in the notoamide biosynthesis has not been determined yet. This chain is Baeyer-Villiger oxidase notM, found in Aspergillus sp. (strain MF297-2).